The sequence spans 247 residues: E3 SUMO-protein ligase NSE2 (247 aa).

Met-1 is subject to N-acetylmethionine. Residues Lys-90 and Lys-107 each participate in a glycyl lysine isopeptide (Lys-Gly) (interchain with G-Cter in SUMO2) cross-link. Ser-116 carries the post-translational modification Phosphoserine. Residues Lys-125 and Lys-130 each participate in a glycyl lysine isopeptide (Lys-Gly) (interchain with G-Cter in SUMO2) cross-link. An SP-RING-type zinc finger spans residues 154-240 (VDEDMIVTQS…LRRAIESHNK (87 aa)). 4 residues coordinate Zn(2+): Cys-185, His-187, Cys-210, and Cys-215.

The protein belongs to the NSE2 family. Component of the SMC5-SMC6 complex which consists at least of SMC5, SMC6, NSMCE2, NSMCE1, NSMCE4A or EID3 and NSMCE3. In terms of processing, sumoylated, possibly via autosumoylation.

It is found in the nucleus. The protein resides in the chromosome. It localises to the telomere. The protein localises to the PML body. It functions in the pathway protein modification; protein sumoylation. In terms of biological role, E3 SUMO-protein ligase component of the SMC5-SMC6 complex, a complex involved in DNA double-strand break repair by homologous recombination. Is not be required for the stability of the complex. The complex may promote sister chromatid homologous recombination by recruiting the SMC1-SMC3 cohesin complex to double-strand breaks. Acts as an E3 ligase mediating SUMO attachment to various proteins such as SMC6L1 and TSNAX, the shelterin complex subunits TERF1, TERF2, TINF2 and TERF2IP, RAD51AP1, and maybe the cohesin components RAD21 and STAG2. Required for recruitment of telomeres to PML nuclear bodies. Required for sister chromatid cohesion during prometaphase and mitotic progression. This chain is E3 SUMO-protein ligase NSE2 (Nsmce2), found in Mus musculus (Mouse).